A 79-amino-acid polypeptide reads, in one-letter code: Sulfur carrier protein TusA (79 aa).

The active-site Cysteine persulfide intermediate is Cys-17.

This sequence belongs to the sulfur carrier protein TusA family.

It is found in the cytoplasm. Sulfur carrier protein which probably makes part of a sulfur-relay system. In Haemophilus influenzae (strain PittEE), this protein is Sulfur carrier protein TusA.